Here is a 329-residue protein sequence, read N- to C-terminus: MSLNVKLHPSGIIFTSDGTSTILDAALDSNIHIEYSCKDGTCGSCKAILISGEVDSAENTFLTEEDVAKGAILTCCSKAKSDIELDVNYYPELSHIQKKTYPCKLDSIEFIGEDIAILSLRLPPTAKIQYLAGQYIDLIINGQRRSYSIANAPGGNGNIELHVRKVVNGVFSNIIFNELKLQQLLRIEGPQGTFFVREDNLPIVFLAGGTGFAPVKSMVEALINKNDQRQVHIYWGMPAGHNFYSDIANEWAIKHPNIHYVPVVSGDDSTWTGATGFVHQAVLEDIPDLSLFNVYACGSLAMITAARNDFINHGLAENKFFSDAFVPSK.

Residues Ser2 to Leu93 enclose the 2Fe-2S ferredoxin-type domain. The [2Fe-2S] cluster site is built by Cys37, Cys42, Cys45, and Cys75. One can recognise an FAD-binding FR-type domain in the interval Lys98–Arg197.

As to quaternary structure, monomer.

It participates in nucleotide-sugar biosynthesis; CDP-ascarylose biosynthesis. It functions in the pathway bacterial outer membrane biogenesis; lipopolysaccharide biosynthesis. Functionally, participates in the conversion of CDP-6-deoxy-D-glycero-L-threo-4-hexulose to 3,6-dideoxy-D-glycero-D-glycero-4-hexulose together with CDP-6-deoxy-D-glycero-L-threo-4-hexulose-3-dehydrase (E1) in two consecutive steps. The detailed mechanism of E3 is not yet resolved. In Yersinia pestis, this protein is CDP-6-deoxy-L-threo-D-glycero-4-hexulose-3-dehydrase reductase (ascD).